The following is a 24-amino-acid chain: U1-plectoxin-Pt1e (24 aa).

A disulfide bridge links Cys4 with Cys18.

It belongs to the neurotoxin 02 (plectoxin) family. 02 (plectoxin) subfamily. In terms of processing, contains 5 disulfide bonds. In terms of tissue distribution, expressed by the venom gland.

Its subcellular location is the secreted. In terms of biological role, potent toxin that may paralyze and/or kill insect pests such as H.virescens (lepidoptera), S.exigua (beet armyworm) and M.sexta (tobacco hornworm). The chain is U1-plectoxin-Pt1e from Plectreurys tristis (Spider).